The following is a 476-amino-acid chain: Glycogen synthase (476 aa).

ADP-alpha-D-glucose is bound at residue Lys-15.

The protein belongs to the glycosyltransferase 1 family. Bacterial/plant glycogen synthase subfamily.

It carries out the reaction [(1-&gt;4)-alpha-D-glucosyl](n) + ADP-alpha-D-glucose = [(1-&gt;4)-alpha-D-glucosyl](n+1) + ADP + H(+). The protein operates within glycan biosynthesis; glycogen biosynthesis. Synthesizes alpha-1,4-glucan chains using ADP-glucose. This Yersinia pseudotuberculosis serotype IB (strain PB1/+) protein is Glycogen synthase.